A 283-amino-acid polypeptide reads, in one-letter code: NADPH-dependent 7-cyano-7-deazaguanine reductase (283 aa).

Residue 90–92 (IES) participates in substrate binding. 92 to 93 (SK) is a binding site for NADPH. Catalysis depends on Cys191, which acts as the Thioimide intermediate. Residue Asp198 is the Proton donor of the active site. 230–231 (HE) lines the substrate pocket. NADPH is bound at residue 259–260 (RG).

Belongs to the GTP cyclohydrolase I family. QueF type 2 subfamily. Homodimer.

The protein resides in the cytoplasm. It catalyses the reaction 7-aminomethyl-7-carbaguanine + 2 NADP(+) = 7-cyano-7-deazaguanine + 2 NADPH + 3 H(+). It participates in tRNA modification; tRNA-queuosine biosynthesis. Functionally, catalyzes the NADPH-dependent reduction of 7-cyano-7-deazaguanine (preQ0) to 7-aminomethyl-7-deazaguanine (preQ1). The protein is NADPH-dependent 7-cyano-7-deazaguanine reductase of Tolumonas auensis (strain DSM 9187 / NBRC 110442 / TA 4).